The primary structure comprises 631 residues: Tail sheath protein (631 aa).

It belongs to the myoviridae tail sheath protein family. Homomultimer.

Its subcellular location is the virion. It localises to the host cytoplasm. Its function is as follows. Polymerizes as an extended structure around the baseplate-tail tube complex. During ejection, the sheath shifts to a contracted form, thereby making the inner tail tube protrude through the host cell envelope. The polypeptide is Tail sheath protein (Salmonella typhi).